The chain runs to 389 residues: Carbamoyl phosphate synthase small chain (389 aa).

The segment at 1–197 (MMSSPAKAAK…AAKDASIGDD (197 aa)) is CPSase. Residues Ser51, Gly249, and Gly251 each contribute to the L-glutamine site. In terms of domain architecture, Glutamine amidotransferase type-1 spans 201–387 (HVVCMDFGMK…QEQLNEKCGV (187 aa)). Cys276 (nucleophile) is an active-site residue. L-glutamine is bound by residues Leu277, Gln280, Asn318, Gly320, and Phe321. Active-site residues include His360 and Glu362.

The protein belongs to the CarA family. Composed of two chains; the small (or glutamine) chain promotes the hydrolysis of glutamine to ammonia, which is used by the large (or ammonia) chain to synthesize carbamoyl phosphate. Tetramer of heterodimers (alpha,beta)4.

The catalysed reaction is hydrogencarbonate + L-glutamine + 2 ATP + H2O = carbamoyl phosphate + L-glutamate + 2 ADP + phosphate + 2 H(+). It carries out the reaction L-glutamine + H2O = L-glutamate + NH4(+). It functions in the pathway amino-acid biosynthesis; L-arginine biosynthesis; carbamoyl phosphate from bicarbonate: step 1/1. Its pathway is pyrimidine metabolism; UMP biosynthesis via de novo pathway; (S)-dihydroorotate from bicarbonate: step 1/3. Its function is as follows. Small subunit of the glutamine-dependent carbamoyl phosphate synthetase (CPSase). CPSase catalyzes the formation of carbamoyl phosphate from the ammonia moiety of glutamine, carbonate, and phosphate donated by ATP, constituting the first step of 2 biosynthetic pathways, one leading to arginine and/or urea and the other to pyrimidine nucleotides. The small subunit (glutamine amidotransferase) binds and cleaves glutamine to supply the large subunit with the substrate ammonia. The chain is Carbamoyl phosphate synthase small chain from Rhodopirellula baltica (strain DSM 10527 / NCIMB 13988 / SH1).